A 222-amino-acid polypeptide reads, in one-letter code: Ornithine decarboxylase antizyme 1 (222 aa).

Belongs to the ODC antizyme family. As to quaternary structure, interacts with ODC1 and thereby sterically blocks ODC homodimerization. Forms a ternary complex with PSMB4 and OAZ1 before PSMB4 is incorporated into the 20S proteasome. Interacts with AZIN2; this interaction disrupts the interaction between the antizyme and ODC1. Interacts with FAM171A1.

Functionally, ornithine decarboxylase (ODC) antizyme protein that negatively regulates ODC activity and intracellular polyamine biosynthesis and uptake in response to increased intracellular polyamine levels. Binds to ODC monomers, inhibiting the assembly of the functional ODC homodimer, and targets the monomers for ubiquitin-independent proteolytic destruction by the 26S proteasome. Triggers ODC degradation by inducing the exposure of a cryptic proteasome-interacting surface of ODC. Stabilizes AZIN2 by interfering with its ubiquitination. Also inhibits cellular uptake of polyamines by inactivating the polyamine uptake transporter. SMAD1/OAZ1/PSMB4 complex mediates the degradation of the CREBBP/EP300 repressor SNIP1. Involved in the translocation of AZIN2 from ER-Golgi intermediate compartment (ERGIC) to the cytosol. The protein is Ornithine decarboxylase antizyme 1 (OAZ1) of Mesocricetus auratus (Golden hamster).